Here is a 198-residue protein sequence, read N- to C-terminus: Probable GTP-binding protein EngB (198 aa).

Residues 22-195 (DLPEIALAGR…WKAIHKFTKT (174 aa)) enclose the EngB-type G domain. GTP-binding positions include 30-37 (GRSNVGKS), 57-61 (GKTQT), 75-78 (DVPG), 142-145 (TKAD), and 174-176 (FSS). Mg(2+) is bound by residues S37 and T59.

Belongs to the TRAFAC class TrmE-Era-EngA-EngB-Septin-like GTPase superfamily. EngB GTPase family. It depends on Mg(2+) as a cofactor.

In terms of biological role, necessary for normal cell division and for the maintenance of normal septation. The polypeptide is Probable GTP-binding protein EngB (Bacillus cytotoxicus (strain DSM 22905 / CIP 110041 / 391-98 / NVH 391-98)).